A 329-amino-acid polypeptide reads, in one-letter code: Octaprenyl diphosphate synthase (329 aa).

Residues lysine 51, arginine 54, and histidine 83 each contribute to the isopentenyl diphosphate site. Positions 90 and 94 each coordinate Mg(2+). Arginine 99 is a binding site for an all-trans-polyprenyl diphosphate. Arginine 100 lines the isopentenyl diphosphate pocket. Positions 176, 177, and 214 each coordinate an all-trans-polyprenyl diphosphate.

The protein belongs to the FPP/GGPP synthase family. Mg(2+) serves as cofactor.

The catalysed reaction is 5 isopentenyl diphosphate + (2E,6E)-farnesyl diphosphate = all-trans-octaprenyl diphosphate + 5 diphosphate. Functionally, supplies octaprenyl diphosphate, the precursor for the side chain of the isoprenoid quinones ubiquinone and menaquinone. The sequence is that of Octaprenyl diphosphate synthase (ispB) from Haemophilus influenzae (strain ATCC 51907 / DSM 11121 / KW20 / Rd).